We begin with the raw amino-acid sequence, 488 residues long: 3-octaprenyl-4-hydroxybenzoate carboxy-lyase (488 aa).

Asn172 lines the Mn(2+) pocket. Prenylated FMN contacts are provided by residues 175 to 177, 189 to 191, and 194 to 195; these read IYR, RWL, and RG. Glu238 serves as a coordination point for Mn(2+). Asp287 serves as the catalytic Proton donor.

Belongs to the UbiD family. As to quaternary structure, homohexamer. Prenylated FMN serves as cofactor. The cofactor is Mn(2+).

It localises to the cell membrane. The catalysed reaction is a 4-hydroxy-3-(all-trans-polyprenyl)benzoate + H(+) = a 2-(all-trans-polyprenyl)phenol + CO2. It participates in cofactor biosynthesis; ubiquinone biosynthesis. Functionally, catalyzes the decarboxylation of 3-octaprenyl-4-hydroxy benzoate to 2-octaprenylphenol, an intermediate step in ubiquinone biosynthesis. The chain is 3-octaprenyl-4-hydroxybenzoate carboxy-lyase from Pseudomonas syringae pv. syringae (strain B728a).